The chain runs to 466 residues: Asparagine--tRNA ligase (466 aa).

This sequence belongs to the class-II aminoacyl-tRNA synthetase family. In terms of assembly, homodimer.

The protein resides in the cytoplasm. The catalysed reaction is tRNA(Asn) + L-asparagine + ATP = L-asparaginyl-tRNA(Asn) + AMP + diphosphate + H(+). This Idiomarina loihiensis (strain ATCC BAA-735 / DSM 15497 / L2-TR) protein is Asparagine--tRNA ligase.